A 243-amino-acid chain; its full sequence is 2,3-bisphosphoglycerate-dependent phosphoglycerate mutase (243 aa).

Residues 8–15 (RHGQSEWN), 21–22 (TG), arginine 60, 87–90 (ERHY), lysine 98, 114–115 (RR), and 183–184 (GN) contribute to the substrate site. Residue histidine 9 is the Tele-phosphohistidine intermediate of the active site. The Proton donor/acceptor role is filled by glutamate 87.

The protein belongs to the phosphoglycerate mutase family. BPG-dependent PGAM subfamily. As to quaternary structure, homodimer.

It carries out the reaction (2R)-2-phosphoglycerate = (2R)-3-phosphoglycerate. The protein operates within carbohydrate degradation; glycolysis; pyruvate from D-glyceraldehyde 3-phosphate: step 3/5. Its function is as follows. Catalyzes the interconversion of 2-phosphoglycerate and 3-phosphoglycerate. The chain is 2,3-bisphosphoglycerate-dependent phosphoglycerate mutase from Maricaulis maris (strain MCS10) (Caulobacter maris).